The following is a 428-amino-acid chain: Enolase (428 aa).

Gln163 contributes to the (2R)-2-phosphoglycerate binding site. Glu205 (proton donor) is an active-site residue. Residues Asp242, Glu285, and Asp311 each coordinate Mg(2+). Lys336, Arg365, Ser366, and Lys387 together coordinate (2R)-2-phosphoglycerate. The Proton acceptor role is filled by Lys336.

The protein belongs to the enolase family. Mg(2+) is required as a cofactor.

It localises to the cytoplasm. It is found in the secreted. Its subcellular location is the cell surface. The catalysed reaction is (2R)-2-phosphoglycerate = phosphoenolpyruvate + H2O. The protein operates within carbohydrate degradation; glycolysis; pyruvate from D-glyceraldehyde 3-phosphate: step 4/5. Its function is as follows. Catalyzes the reversible conversion of 2-phosphoglycerate (2-PG) into phosphoenolpyruvate (PEP). It is essential for the degradation of carbohydrates via glycolysis. This chain is Enolase, found in Desulfatibacillum aliphaticivorans.